A 146-amino-acid chain; its full sequence is Holo-[acyl-carrier-protein] synthase (146 aa).

Residues aspartate 9 and glutamate 63 each contribute to the Mg(2+) site.

This sequence belongs to the P-Pant transferase superfamily. AcpS family. Mg(2+) serves as cofactor.

It localises to the cytoplasm. It carries out the reaction apo-[ACP] + CoA = holo-[ACP] + adenosine 3',5'-bisphosphate + H(+). In terms of biological role, transfers the 4'-phosphopantetheine moiety from coenzyme A to a Ser of acyl-carrier-protein. The protein is Holo-[acyl-carrier-protein] synthase of Burkholderia multivorans (strain ATCC 17616 / 249).